Reading from the N-terminus, the 143-residue chain is 3-hydroxyacyl-[acyl-carrier-protein] dehydratase FabZ (143 aa).

Residue histidine 49 is part of the active site.

It belongs to the thioester dehydratase family. FabZ subfamily.

The protein resides in the cytoplasm. It catalyses the reaction a (3R)-hydroxyacyl-[ACP] = a (2E)-enoyl-[ACP] + H2O. In terms of biological role, involved in unsaturated fatty acids biosynthesis. Catalyzes the dehydration of short chain beta-hydroxyacyl-ACPs and long chain saturated and unsaturated beta-hydroxyacyl-ACPs. In Wolbachia pipientis subsp. Culex pipiens (strain wPip), this protein is 3-hydroxyacyl-[acyl-carrier-protein] dehydratase FabZ.